The sequence spans 861 residues: ToMV resistance protein Tm-2(2) (861 aa).

The stretch at 63–83 (VKNLLKDIQELAGDVEDLLDD) forms a coiled coil. The NB-ARC domain maps to 162-388 (DDFNMLQAKL…LESMGHKVQD (227 aa)). 185 to 192 (GMPGLGKT) lines the ATP pocket. LRR repeat units follow at residues 225-248 (LDIA…NLRS), 305-327 (LHAL…IFNF), 388-411 (DGCA…CFLY), 449-472 (LAED…TYNG), 510-536 (VARL…KLEK), 585-608 (MTCL…IVKL), 609-631 (TRLE…VWES), 652-680 (ISSF…FFEP), 689-710 (LRKL…IFSP), 712-735 (LKAL…LSSY), 736-758 (PHIA…SFPP), 784-810 (LRKL…GYSF), and 811-835 (PQLE…DVSM).

This sequence belongs to the disease resistance NB-LRR family. (Microbial infection) Interacts with tobamoviruses mouvement protein (e.g. tobacco mosaic virus (TMV) MP, AC P03583) at the plasma membrane; this interaction triggers defense responses leading to programmed cell death. As to quaternary structure, binds to HSP90 proteins (e.g. HSP90-1 and Nicotiana benthamiana HSP90-1); this interaction seems required for defense responses toward tobamoviruses.

The protein localises to the cell membrane. Functionally, inhibitor of viral mouvements which confers resistance to some tobamoviruses including tomato mosaic virus (ToMV) (e.g. strains L, B7 and ToMV1-2) and tobacco mosaic virus (TMV), but not to resistance-breaking isolates (e.g. LIIA and ToMV2(2)) ToMV and tomato brown rugose fruit virus (ToBRFV). Elicits a hypersensitive reaction in response to avirulent (Avr) movement proteins from resistance inducing tobamoviruses (e.g. ToMV and TMV) strains, thus leading to programmed cell death; this local extreme resistance requires rbcS. This chain is ToMV resistance protein Tm-2(2), found in Solanum lycopersicum (Tomato).